We begin with the raw amino-acid sequence, 609 residues long: MASKEEERTGQRPSISMYDPARDRWEEQPVVPAEPASASASIEATPTQTSEAKPVHDSTVTSTSESLHLPQTTTIEPSQQPEQQQKQPPIPTPPSSQSRRKHKINKMGDYYRSGSADAYAEQSSPAADSHKRKLEDETSEQQPPADQANDRPISKRKRLEERHQKLRKRGQAPPSAYSRRDGDETAARAAPRPRSPSPPLPPRSPSPEVQARQRKRPGGGARRGLVDPQTLRRRQEERERALEEDAMRNSQSRGVTDIVRQHYNAVPQRGREWRKTESKIKGLRSFNNWVKSTLIQKFSPDEEFEKRLLVIDLGCGKGGDLGKWQLAPQPVDLYVGLDPAEVSIIQARERYAGMRSGRGPRGGRRGGPPLFHGEFRSKDCFGEWLGDVDIVQQVGIDPNVGPGGSMMASRWGGGGFDVVTSMFAIHYAFESEEKARQMLRNVAGCLKKGGRFIGVCPNSDIISARVEEEAKAEWGNSIYRVRFPGDTPEDGIFRPPFGWKYSYFMEEAVGEIPEYVVPWEAFRALTEEYNLELQYRKPFMEVWRDEKDDPELGPLSERMGVRDRTTGELTMTPEEQEAVSKYTPLGFTSAEGESANGTGFYHAFCFYKV.

Over residues 1 to 10 (MASKEEERTG) the composition is skewed to basic and acidic residues. Residues 1–252 (MASKEEERTG…EEDAMRNSQS (252 aa)) form a disordered region. Low complexity-rich tracts occupy residues 28-47 (QPVVPAEPASASASIEATPT) and 70-87 (PQTTTIEPSQQPEQQQKQ). A compositionally biased stretch (basic and acidic residues) spans 148-163 (ANDRPISKRKRLEERH). A compositionally biased stretch (pro residues) spans 193–205 (PRSPSPPLPPRSP). Basic and acidic residues predominate over residues 233-247 (RRQEERERALEEDAM). An mRNA cap 0 methyltransferase domain is found at 278–590 (SKIKGLRSFN…KYTPLGFTSA (313 aa)). 287–288 (NN) serves as a coordination point for mRNA. S-adenosyl-L-methionine-binding positions include K291, G314, D338, D379, 422 to 424 (MFA), and Y427.

Belongs to the class I-like SAM-binding methyltransferase superfamily. mRNA cap 0 methyltransferase family.

It is found in the nucleus. It carries out the reaction a 5'-end (5'-triphosphoguanosine)-ribonucleoside in mRNA + S-adenosyl-L-methionine = a 5'-end (N(7)-methyl 5'-triphosphoguanosine)-ribonucleoside in mRNA + S-adenosyl-L-homocysteine. Its function is as follows. Responsible for methylating the 5'-cap structure of mRNAs. The protein is mRNA cap guanine-N(7) methyltransferase (abd1) of Aspergillus niger (strain ATCC MYA-4892 / CBS 513.88 / FGSC A1513).